The chain runs to 392 residues: 2-oxoisovalerate dehydrogenase subunit beta, mitochondrial (392 aa).

The transit peptide at 1 to 50 (MAAVAAFAGWLLRLRAAGADGPWRRLCGAGLSRGFLQSASAYGAAAQRRQ) directs the protein to the mitochondrion. Thiamine diphosphate is bound at residue tyrosine 152. Residues glycine 178, leucine 180, threonine 181, cysteine 228, and aspartate 231 each coordinate K(+). At lysine 232 the chain carries N6-acetyllysine. Asparagine 233 contacts K(+). Lysine 241 is modified (N6-acetyllysine).

As to quaternary structure, heterotetramer of 2 alpha/BCKDHA and 2 beta chains/BCKDHB that forms the branched-chain alpha-keto acid decarboxylase (E1) component of the BCKD complex. The branched-chain alpha-ketoacid dehydrogenase is a large complex composed of three major building blocks E1, E2 and E3. It is organized around E2, a 24-meric cubic core composed of DBT, to which are associated 6 to 12 copies of E1, and approximately 6 copies of the dehydrogenase E3, a DLD dimer. It depends on thiamine diphosphate as a cofactor.

It localises to the mitochondrion matrix. The enzyme catalyses N(6)-[(R)-lipoyl]-L-lysyl-[protein] + 3-methyl-2-oxobutanoate + H(+) = N(6)-[(R)-S(8)-2-methylpropanoyldihydrolipoyl]-L-lysyl-[protein] + CO2. Its function is as follows. Together with BCKDHA forms the heterotetrameric E1 subunit of the mitochondrial branched-chain alpha-ketoacid dehydrogenase (BCKD) complex. The BCKD complex catalyzes the multi-step oxidative decarboxylation of alpha-ketoacids derived from the branched-chain amino-acids valine, leucine and isoleucine producing CO2 and acyl-CoA which is subsequently utilized to produce energy. The E1 subunit catalyzes the first step with the decarboxylation of the alpha-ketoacid forming an enzyme-product intermediate. A reductive acylation mediated by the lipoylamide cofactor of E2 extracts the acyl group from the E1 active site for the next step of the reaction. In Bos taurus (Bovine), this protein is 2-oxoisovalerate dehydrogenase subunit beta, mitochondrial (BCKDHB).